The following is a 347-amino-acid chain: Sulfate/thiosulfate import ATP-binding protein CysA 1 (347 aa).

Residues 3–237 (VRVESLRKEF…PVSPFVYGFI (235 aa)) enclose the ABC transporter domain. Residue 35–42 (GPSGSGKT) participates in ATP binding.

Belongs to the ABC transporter superfamily. Sulfate/tungstate importer (TC 3.A.1.6) family. As to quaternary structure, the complex is composed of two ATP-binding proteins (CysA), two transmembrane proteins (CysT and CysW) and a solute-binding protein (CysP).

The protein localises to the cell inner membrane. It carries out the reaction sulfate(out) + ATP + H2O = sulfate(in) + ADP + phosphate + H(+). The catalysed reaction is thiosulfate(out) + ATP + H2O = thiosulfate(in) + ADP + phosphate + H(+). Its function is as follows. Part of the ABC transporter complex CysAWTP involved in sulfate/thiosulfate import. Responsible for energy coupling to the transport system. This Rhizobium meliloti (strain 1021) (Ensifer meliloti) protein is Sulfate/thiosulfate import ATP-binding protein CysA 1.